Here is a 75-residue protein sequence, read N- to C-terminus: Exodeoxyribonuclease 7 small subunit (75 aa).

The protein belongs to the XseB family. In terms of assembly, heterooligomer composed of large and small subunits.

The protein resides in the cytoplasm. It carries out the reaction Exonucleolytic cleavage in either 5'- to 3'- or 3'- to 5'-direction to yield nucleoside 5'-phosphates.. Its function is as follows. Bidirectionally degrades single-stranded DNA into large acid-insoluble oligonucleotides, which are then degraded further into small acid-soluble oligonucleotides. This is Exodeoxyribonuclease 7 small subunit from Chlamydia abortus (strain DSM 27085 / S26/3) (Chlamydophila abortus).